A 349-amino-acid polypeptide reads, in one-letter code: TEGPYFYIPMSNATGVVRSPYEYPQYYLVYPAAFAVLGAYMFFLIIFGFPVNFLTLYVTIEHKKLRTPLNYILLNLAVADLFMVIGGFTTTIYTSMHGYFVLGRLGCNLEGFSATLGGMISLWSLVVLAVERWVVVCKPMSNFRFGENHAIMGVTLTWAMGLACTVPPLVGWSRYIPEGMQCSCGIDYYTRAEGFNNESFVLYMFVCHFSFPLVVIFFCYGRLLCAVKEAAAAQQESETTQRAEREVTRMVILMVIGFLVCWLPYASVAWYIFTHQGSEFGPLFMTIPAFFAKSSAIYNPVIYICLNKQFRQCMLTTLFCGKNPFEEEEGASSTKTEASSASSSSVSPA.

Topologically, residues 1–33 (TEGPYFYIPMSNATGVVRSPYEYPQYYLVYPAA) are extracellular. N-linked (GlcNAc...) asparagine glycosylation occurs at N12. Residues 34 to 58 (FAVLGAYMFFLIIFGFPVNFLTLYV) traverse the membrane as a helical segment. Residues 59 to 70 (TIEHKKLRTPLN) lie on the Cytoplasmic side of the membrane. The chain crosses the membrane as a helical span at residues 71–93 (YILLNLAVADLFMVIGGFTTTIY). Topologically, residues 94–107 (TSMHGYFVLGRLGC) are extracellular. A disulfide bridge connects residues C107 and C184. The helical transmembrane segment at 108-130 (NLEGFSATLGGMISLWSLVVLAV) threads the bilayer. Positions 131-133 (ERW) match the 'Ionic lock' involved in activated form stabilization motif. Residues 131-149 (ERWVVVCKPMSNFRFGENH) are Cytoplasmic-facing. A helical membrane pass occupies residues 150–170 (AIMGVTLTWAMGLACTVPPLV). At 171-199 (GWSRYIPEGMQCSCGIDYYTRAEGFNNES) the chain is on the extracellular side. N197 is a glycosylation site (N-linked (GlcNAc...) asparagine). A helical membrane pass occupies residues 200–221 (FVLYMFVCHFSFPLVVIFFCYG). The Cytoplasmic segment spans residues 222 to 249 (RLLCAVKEAAAAQQESETTQRAEREVTR). The helical transmembrane segment at 250–271 (MVILMVIGFLVCWLPYASVAWY) threads the bilayer. Topologically, residues 272 to 283 (IFTHQGSEFGPL) are extracellular. The chain crosses the membrane as a helical span at residues 284-305 (FMTIPAFFAKSSAIYNPVIYIC). Residue K293 is modified to N6-(retinylidene)lysine. Topologically, residues 306-349 (LNKQFRQCMLTTLFCGKNPFEEEEGASSTKTEASSASSSSVSPA) are cytoplasmic. C320 carries S-palmitoyl cysteine lipidation. Residues 326 to 349 (EEEEGASSTKTEASSASSSSVSPA) form a disordered region. The span at 331–349 (ASSTKTEASSASSSSVSPA) shows a compositional bias: low complexity.

Belongs to the G-protein coupled receptor 1 family. Opsin subfamily. In terms of processing, phosphorylated on some or all of the serine and threonine residues present in the C-terminal region. Contains one covalently linked retinal chromophore.

It localises to the membrane. The protein resides in the cell projection. Its subcellular location is the cilium. The protein localises to the photoreceptor outer segment. Photoreceptor required for image-forming vision at low light intensity. While most salt water fish species use retinal as chromophore, most freshwater fish use 3-dehydroretinal, or a mixture of retinal and 3-dehydroretinal. Light-induced isomerization of 11-cis to all-trans retinal triggers a conformational change that activates signaling via G-proteins. Subsequent receptor phosphorylation mediates displacement of the bound G-protein alpha subunit by arrestin and terminates signaling. The sequence is that of Rhodopsin (rho) from Myripristis berndti (Bigscale soldierfish).